Reading from the N-terminus, the 321-residue chain is Cyclic AMP-AMP-AMP synthase (321 aa).

Lysine 63 provides a ligand contact to ATP. Residues aspartate 72 and aspartate 74 each contribute to the Mg(2+) site. ATP-binding positions include aspartate 74, histidine 162, lysine 185, 201-203 (KSF), and asparagine 270.

This sequence belongs to the CD-NTase family. A01 subfamily. In terms of assembly, forms complexes with Cap7 with 1:1 and 2:2 stoichimetry, and a 1:1:6 CdnC:Cap7:Cap6 complex. Mg(2+) is required as a cofactor.

It catalyses the reaction 3 ATP = 3',3',3'-c-tri-AMP + 3 diphosphate. It carries out the reaction 2 ATP = 3',3'-c-di-AMP + 2 diphosphate. Its activity is regulated as follows. The 2:2 CdnC:Cap7 (Cap7 is also called HORMA) complex is activated for cAAA synthesis by long dsDNA, but not 40 bp dsDNA or ssDNA; the 1:1 complex is inactive in vitro. The 2:2:DNA complex is catalytically disassembled and inactivated by Cap6 (also called Trip13). Cyclic nucleotide synthase (second messenger synthase) of a CBASS antivirus system. CBASS (cyclic oligonucleotide-based antiphage signaling system) provides immunity against bacteriophage. The CD-NTase protein synthesizes cyclic nucleotides in response to infection; these serve as specific second messenger signals. The signals activate a diverse range of effectors, leading to bacterial cell death and thus abortive phage infection. A type III-C(AAA) CBASS system. Functionally, cyclic nucleotide synthase that upon activation catalyzes the synthesis of 3',3',3'-cyclic AMP-AMP-AMP (3',3',3'-c-tri-AMP or cAAA) as the major product, and 3',3'-c-di-AMP as a minor product. Cannot use GTP as a substrate. Its function is as follows. Protects E.coli strain JP313 against bacteriophage lambda cI- infection. When the cdnC-cap7-cap6-nucC operon is transformed into a susceptible strain it confers bacteriophage immunity. Mutations in the sensor (Cap7 also called HORMA) or effector proteins (CdnC, NucC) but not the disassembly protein (Cap6 also called Trip13) no longer confer immunity. The presence of the intact operon leads to culture collapse and cell death, which occurs before the phage has finished its replication cycle, thus protecting non-infected bacteria by aborting the phage infection and preventing its propagation. This Escherichia coli (strain MS 115-1) protein is Cyclic AMP-AMP-AMP synthase.